A 649-amino-acid chain; its full sequence is Stress-70 protein, mitochondrial (649 aa).

Residues 1-46 (MISASRAAAARLVGAAASRGPTAARHKDGWNGLSHEAFRIVSRRDY) constitute a mitochondrion transit peptide. Positions 1–432 (MISASRAAAA…IQGGVLAGDV (432 aa)) are interaction with NFS1. Residues threonine 63 and asparagine 64 each coordinate ADP. The segment at 63 to 431 (TNSCVAVMEG…AIQGGVLAGD (369 aa)) is nucleotide-binding domain (NBD). Lysine 76 is subject to N6-acetyllysine. A Phosphothreonine modification is found at threonine 87. Lysine 135 and lysine 138 each carry N6-acetyllysine; alternate. Residues lysine 135 and lysine 138 each carry the N6-succinyllysine; alternate modification. Lysine 143 is subject to N6-acetyllysine. Lysine 206 is subject to N6-acetyllysine; alternate. Lysine 206 carries the N6-succinyllysine; alternate modification. Lysine 206 is subject to N6-malonyllysine; alternate. N6-acetyllysine occurs at positions 234 and 288. An N6-acetyllysine; alternate modification is found at lysine 300. The residue at position 300 (lysine 300) is an N6-succinyllysine; alternate. ADP is bound by residues glutamate 313, lysine 316, and serine 320. Position 368 is an N6-succinyllysine (lysine 368). ADP is bound by residues glycine 388 and arginine 391. Lysine 394 carries the post-translational modification N6-succinyllysine. Serine 408 is subject to Phosphoserine. Residues 432-441 (VTDVLLLDVT) form an interdomain linker region. N6-acetyllysine; alternate occurs at positions 565, 598, and 638. N6-succinyllysine; alternate is present on residues lysine 565, lysine 598, and lysine 638.

It belongs to the heat shock protein 70 family. Interacts strongly with the intermediate form of FXN and weakly with its mature form. Interacts with HSCB. Associates with the mitochondrial contact site and cristae organizing system (MICOS) complex, composed of at least MICOS10/MIC10, CHCHD3/MIC19, CHCHD6/MIC25, APOOL/MIC27, IMMT/MIC60, APOO/MIC23/MIC26 and QIL1/MIC13. This complex was also known under the names MINOS or MitOS complex. The MICOS complex associates with mitochondrial outer membrane proteins SAMM50, MTX1, MTX2 and DNAJC11, mitochondrial inner membrane protein TMEM11 and with HSPA9. Interacts with DNLZ, the interaction is required to prevent self-aggregation. Interacts with TESPA1. Interacts with PDPN. Interacts with NFU1, NFS1 and ISCU. Interacts with TP53; the interaction promotes TP53 degradation. Interacts (via SBD domain) with UBXN2A; the interaction with UBXN2A inhibits HSPA9/MOT-2 interaction with and degradation of TP53, thereby promotes TP53 translocation to the nucleus. Interacts with ITPR1 AND VDAC1; this interaction couples ITPR1 to VDAC1. Component of the TIM23 mitochondrial inner membrane pre-sequence translocase complex.

The protein localises to the mitochondrion. It is found in the nucleus. It localises to the nucleolus. Its subcellular location is the cytoplasm. The protein resides in the mitochondrion matrix. It catalyses the reaction ATP + H2O = ADP + phosphate + H(+). Its activity is regulated as follows. The chaperone activity is regulated by ATP-induced allosteric coupling of the nucleotide-binding (NBD) and substrate-binding (SBD) domains. ATP binding in the NBD leads to a conformational change in the NBD, which is transferred through the interdomain linker (IDL) to the substrate-binding domain (SBD). This elicits a reduced substrate affinity and a faster substrate exchange rate. Upon hydrolysis of ATP to ADP, the protein undergoes a conformational change that increases its affinity for substrate proteins. It cycles through repeated phases of ATP hydrolysis and nucleotide exchange, facilitating repeated cycles of substrate binding and release. Functions in collaboration with co-chaperones. Functions with the co-chaperone, DNLZ, to maintain solubility and regulate ATP hydrolysis. Nucleotide exchange factors, GRPEL1 and GRPEL2, accelerate nucleotide exchange. In terms of biological role, mitochondrial chaperone that plays a key role in mitochondrial protein import, folding, and assembly. Plays an essential role in the protein quality control system, the correct folding of proteins, the re-folding of misfolded proteins, and the targeting of proteins for subsequent degradation. These processes are achieved through cycles of ATP binding, ATP hydrolysis, and ADP release, mediated by co-chaperones. In mitochondria, it associates with the TIM (translocase of the inner membrane) protein complex to assist in the import and folding of mitochondrial proteins. Plays an important role in mitochondrial iron-sulfur cluster (ISC) biogenesis, interacts with and stabilizes ISC cluster assembly proteins FXN, NFU1, NFS1 and ISCU. Regulates erythropoiesis via stabilization of ISC assembly. Regulates mitochondrial calcium-dependent apoptosis by coupling two calcium channels, ITPR1 and VDAC1, at the mitochondria-associated endoplasmic reticulum (ER) membrane to facilitate calcium transport from the ER lumen to the mitochondria intermembrane space, providing calcium for the downstream calcium channel MCU, which releases it into the mitochondrial matrix. Although primarily located in the mitochondria, it is also found in other cellular compartments. In the cytosol, it associates with proteins involved in signaling, apoptosis, or senescence. It may play a role in cell cycle regulation via its interaction with and promotion of degradation of TP53. May play a role in the control of cell proliferation and cellular aging. Protects against reactive oxygen species (ROS). Extracellular HSPA9 plays a cytoprotective role by preventing cell lysis following immune attack by the membrane attack complex by disrupting formation of the complex. The chain is Stress-70 protein, mitochondrial from Canis lupus familiaris (Dog).